A 283-amino-acid chain; its full sequence is Putative UTP--glucose-1-phosphate uridylyltransferase (283 aa).

Belongs to the UDPGP type 2 family.

It carries out the reaction alpha-D-glucose 1-phosphate + UTP + H(+) = UDP-alpha-D-glucose + diphosphate. This is Putative UTP--glucose-1-phosphate uridylyltransferase from Methanocaldococcus jannaschii (strain ATCC 43067 / DSM 2661 / JAL-1 / JCM 10045 / NBRC 100440) (Methanococcus jannaschii).